Consider the following 150-residue polypeptide: Large ribosomal subunit protein bL9 (150 aa).

Belongs to the bacterial ribosomal protein bL9 family.

Functionally, binds to the 23S rRNA. The polypeptide is Large ribosomal subunit protein bL9 (Enterococcus faecalis (strain ATCC 700802 / V583)).